The sequence spans 352 residues: Isoflavone-7-O-methyltransferase 9 (352 aa).

Residue 118–127 (VLDPTLSGSY) coordinates substrate. Glycine 196, aspartate 219, aspartate 239, methionine 240, and lysine 253 together coordinate S-adenosyl-L-methionine. Histidine 257 functions as the Proton acceptor in the catalytic mechanism.

Belongs to the class I-like SAM-binding methyltransferase superfamily. Cation-independent O-methyltransferase family. COMT subfamily. In terms of assembly, homodimer.

It carries out the reaction a 7-hydroxyisoflavone + S-adenosyl-L-methionine = a 7-methoxyisoflavone + S-adenosyl-L-homocysteine + H(+). It functions in the pathway phytoalexin biosynthesis; medicarpin biosynthesis. Transfers a methyl group to 7-hydroxyls of the isoflavones daidzein, genistein and 6,7,4'-trihydroxyisoflavone. Can also methylate (+)6a-hydroxymaackiain with lower efficiency. The sequence is that of Isoflavone-7-O-methyltransferase 9 from Medicago sativa (Alfalfa).